We begin with the raw amino-acid sequence, 246 residues long: tRNA (guanine-N(1)-)-methyltransferase (246 aa).

Residues G113 and I133–L138 each bind S-adenosyl-L-methionine.

It belongs to the RNA methyltransferase TrmD family. Homodimer.

It localises to the cytoplasm. The enzyme catalyses guanosine(37) in tRNA + S-adenosyl-L-methionine = N(1)-methylguanosine(37) in tRNA + S-adenosyl-L-homocysteine + H(+). In terms of biological role, specifically methylates guanosine-37 in various tRNAs. This is tRNA (guanine-N(1)-)-methyltransferase from Haemophilus influenzae (strain PittGG).